The sequence spans 104 residues: DNA-directed RNA polymerase subunit omega (104 aa).

Belongs to the RNA polymerase subunit omega family. In terms of assembly, the RNAP catalytic core consists of 2 alpha, 1 beta, 1 beta' and 1 omega subunit. When a sigma factor is associated with the core the holoenzyme is formed, which can initiate transcription.

The enzyme catalyses RNA(n) + a ribonucleoside 5'-triphosphate = RNA(n+1) + diphosphate. Functionally, promotes RNA polymerase assembly. Latches the N- and C-terminal regions of the beta' subunit thereby facilitating its interaction with the beta and alpha subunits. The polypeptide is DNA-directed RNA polymerase subunit omega (rpoZ) (Streptococcus pyogenes serotype M1).